Reading from the N-terminus, the 225-residue chain is Methylthioribulose-1-phosphate dehydratase (225 aa).

2 residues coordinate Zn(2+): histidine 106 and histidine 108.

Belongs to the aldolase class II family. MtnB subfamily. Zn(2+) is required as a cofactor.

The enzyme catalyses 5-(methylsulfanyl)-D-ribulose 1-phosphate = 5-methylsulfanyl-2,3-dioxopentyl phosphate + H2O. It functions in the pathway amino-acid biosynthesis; L-methionine biosynthesis via salvage pathway; L-methionine from S-methyl-5-thio-alpha-D-ribose 1-phosphate: step 2/6. Its function is as follows. Catalyzes the dehydration of methylthioribulose-1-phosphate (MTRu-1-P) into 2,3-diketo-5-methylthiopentyl-1-phosphate (DK-MTP-1-P). The polypeptide is Methylthioribulose-1-phosphate dehydratase (Xanthomonas oryzae pv. oryzae (strain MAFF 311018)).